A 278-amino-acid chain; its full sequence is Indole-3-glycerol phosphate synthase (278 aa).

Belongs to the TrpC family.

It carries out the reaction 1-(2-carboxyphenylamino)-1-deoxy-D-ribulose 5-phosphate + H(+) = (1S,2R)-1-C-(indol-3-yl)glycerol 3-phosphate + CO2 + H2O. Its pathway is amino-acid biosynthesis; L-tryptophan biosynthesis; L-tryptophan from chorismate: step 4/5. The protein is Indole-3-glycerol phosphate synthase of Pseudomonas aeruginosa (strain UCBPP-PA14).